The chain runs to 159 residues: Transcription elongation factor A protein-like 1 (159 aa).

The interval 1–99 (MDKPRKENEE…CGVGKHKLEE (99 aa)) is disordered. Over residues 17-34 (KTDEERPPVEHSPEKQSL) the composition is skewed to basic and acidic residues. Over residues 37 to 54 (QSSEEQSSEEEFFPEELL) the composition is skewed to acidic residues. Over residues 64 to 80 (SEERPPQEGLSRKDLFE) the composition is skewed to basic and acidic residues.

It belongs to the TFS-II family. TFA subfamily.

The protein localises to the nucleus. Functionally, may be involved in transcriptional regulation. Modulates various viral and cellular promoters in a promoter context-dependent manner. Does not bind DNA directly. This chain is Transcription elongation factor A protein-like 1, found in Ateles geoffroyi (Black-handed spider monkey).